The chain runs to 675 residues: L-type lectin-domain containing receptor kinase IV.1 (675 aa).

Positions methionine 1–serine 22 are cleaved as a signal peptide. Residues glutamine 23–lysine 291 are Extracellular-facing. A legume-lectin like region spans residues leucine 25–phenylalanine 261. Asparagine 57, asparagine 79, asparagine 112, asparagine 134, asparagine 153, and asparagine 186 each carry an N-linked (GlcNAc...) asparagine glycan. A helical transmembrane segment spans residues isoleucine 292–isoleucine 312. Over valine 313–arginine 675 the chain is Cytoplasmic. A Protein kinase domain is found at phenylalanine 347–leucine 624. ATP-binding positions include leucine 353–valine 361 and lysine 376. Catalysis depends on aspartate 472, which acts as the Proton acceptor.

The protein in the C-terminal section; belongs to the protein kinase superfamily. Ser/Thr protein kinase family. This sequence in the N-terminal section; belongs to the leguminous lectin family.

The protein resides in the membrane. The catalysed reaction is L-seryl-[protein] + ATP = O-phospho-L-seryl-[protein] + ADP + H(+). It carries out the reaction L-threonyl-[protein] + ATP = O-phospho-L-threonyl-[protein] + ADP + H(+). This Arabidopsis thaliana (Mouse-ear cress) protein is L-type lectin-domain containing receptor kinase IV.1 (LECRK41).